Here is a 273-residue protein sequence, read N- to C-terminus: Light-independent protochlorophyllide reductase iron-sulfur ATP-binding protein (273 aa).

Residues 12–17 (GIGKST) and Lys41 each bind ATP. Ser16 is a binding site for Mg(2+). 2 residues coordinate [4Fe-4S] cluster: Cys97 and Cys131. 182 to 183 (NR) serves as a coordination point for ATP.

It belongs to the NifH/BchL/ChlL family. In terms of assembly, homodimer. Protochlorophyllide reductase is composed of three subunits; BchL, BchN and BchB. Requires [4Fe-4S] cluster as cofactor.

It catalyses the reaction chlorophyllide a + oxidized 2[4Fe-4S]-[ferredoxin] + 2 ADP + 2 phosphate = protochlorophyllide a + reduced 2[4Fe-4S]-[ferredoxin] + 2 ATP + 2 H2O. It participates in porphyrin-containing compound metabolism; bacteriochlorophyll biosynthesis (light-independent). In terms of biological role, component of the dark-operative protochlorophyllide reductase (DPOR) that uses Mg-ATP and reduced ferredoxin to reduce ring D of protochlorophyllide (Pchlide) to form chlorophyllide a (Chlide). This reaction is light-independent. The L component serves as a unique electron donor to the NB-component of the complex, and binds Mg-ATP. This chain is Light-independent protochlorophyllide reductase iron-sulfur ATP-binding protein, found in Roseiflexus castenholzii (strain DSM 13941 / HLO8).